The sequence spans 138 residues: Holo-[acyl-carrier-protein] synthase (138 aa).

2 residues coordinate Mg(2+): D8 and E60.

Belongs to the P-Pant transferase superfamily. AcpS family. Mg(2+) is required as a cofactor.

It is found in the cytoplasm. The catalysed reaction is apo-[ACP] + CoA = holo-[ACP] + adenosine 3',5'-bisphosphate + H(+). Transfers the 4'-phosphopantetheine moiety from coenzyme A to a Ser of acyl-carrier-protein. The polypeptide is Holo-[acyl-carrier-protein] synthase (Magnetococcus marinus (strain ATCC BAA-1437 / JCM 17883 / MC-1)).